The primary structure comprises 345 residues: MRVADFSFELPDELIARYPTAERTASRLLSLDGNSGELTDLQFTDILEQVNLGDLMVFNNTRVIPARMFGQKQSGGKLEILVERMLDDKRVLAHVRCSKSPKVDSIICLDGGYEMIMVARHDALFELELQSDKTILEVLEDVGHMPLPPYIDRPDEDADKERYQTVYNQNPGAVAAPTAGLHFDDAMLAALKDKGVNTAFVTLHVGAGTFQPVRVDNILDHKMHSEWAEVPQNVVDLIAETKTRGNRVIAVGTTSVRSLESAAKASPEQLEAFSGDTDIFIYPGYQFQVVDAMVTNFHLPESTLIMLLSAFAGFDEVKNAYQHAIAQKYRFFSYGDAMFVTKKAN.

This sequence belongs to the QueA family. In terms of assembly, monomer.

Its subcellular location is the cytoplasm. The enzyme catalyses 7-aminomethyl-7-carbaguanosine(34) in tRNA + S-adenosyl-L-methionine = epoxyqueuosine(34) in tRNA + adenine + L-methionine + 2 H(+). Its pathway is tRNA modification; tRNA-queuosine biosynthesis. Its function is as follows. Transfers and isomerizes the ribose moiety from AdoMet to the 7-aminomethyl group of 7-deazaguanine (preQ1-tRNA) to give epoxyqueuosine (oQ-tRNA). In Shewanella halifaxensis (strain HAW-EB4), this protein is S-adenosylmethionine:tRNA ribosyltransferase-isomerase.